The sequence spans 430 residues: Putative golgin subfamily A member 8D (430 aa).

Residues 2-217 (EWKLEQSMRE…LTAQLSLMAL (216 aa)) are a coiled coil. 4 disordered regions span residues 138 to 158 (LREQEERLQEQQERLPEQEER), 217 to 239 (LPGEGHGGEHLDSEGEEAPRPMP), 290 to 331 (PITK…GVAA), and 382 to 406 (PVQGEAREGSPHDNPTAQPIVQDHQ). A compositionally biased stretch (basic and acidic residues) spans 222–235 (HGGEHLDSEGEEAP). Gly residues predominate over residues 303 to 316 (PGGGHHQAGPGQGG).

Belongs to the GOLGA8 family.

The protein is Putative golgin subfamily A member 8D (GOLGA8DP) of Homo sapiens (Human).